Here is a 64-residue protein sequence, read N- to C-terminus: Large ribosomal subunit protein bL35 (64 aa).

The disordered stretch occupies residues 1–23; sequence MPKMKTKSGAAKRFKKTANGFKH.

The protein belongs to the bacterial ribosomal protein bL35 family.

This Stutzerimonas stutzeri (strain A1501) (Pseudomonas stutzeri) protein is Large ribosomal subunit protein bL35.